We begin with the raw amino-acid sequence, 1218 residues long: Probable RNA-dependent RNA polymerase SHL2 (1218 aa).

Belongs to the RdRP family.

The enzyme catalyses RNA(n) + a ribonucleoside 5'-triphosphate = RNA(n+1) + diphosphate. Functionally, involved in the RNA silencing pathway. Probably required for the generation of small interfering RNAs (siRNAs). Regulates shoot apical meristem (SAM) initiation and maintenance and leaf polarization through the trans-acting siRNAS (ta-siRNAs) pathway which probably modulates the expression of the ARF2, ARF3, ARF4, ARF14 and ARF15 genes. The chain is Probable RNA-dependent RNA polymerase SHL2 (SHL2) from Oryza sativa subsp. japonica (Rice).